Reading from the N-terminus, the 264-residue chain is Putative serine carboxypeptidase-like 53 (264 aa).

An N-terminal signal peptide occupies residues methionine 1 to threonine 23. N-linked (GlcNAc...) asparagine glycosylation is found at asparagine 65, asparagine 101, asparagine 153, and asparagine 184.

The protein belongs to the peptidase S10 family.

The protein resides in the secreted. The sequence is that of Putative serine carboxypeptidase-like 53 (SCPL53) from Arabidopsis thaliana (Mouse-ear cress).